Reading from the N-terminus, the 356-residue chain is sn-glycerol-3-phosphate import ATP-binding protein UgpC (356 aa).

An ABC transporter domain is found at 4-235; the sequence is LKLQAVTKSW…PASLFVASFI (232 aa). 37–44 lines the ATP pocket; that stretch reads GPSGCGKS.

It belongs to the ABC transporter superfamily. sn-glycerol-3-phosphate importer (TC 3.A.1.1.3) family. The complex is composed of two ATP-binding proteins (UgpC), two transmembrane proteins (UgpA and UgpE) and a solute-binding protein (UgpB).

It is found in the cell inner membrane. The enzyme catalyses sn-glycerol 3-phosphate(out) + ATP + H2O = sn-glycerol 3-phosphate(in) + ADP + phosphate + H(+). It catalyses the reaction glycerol 2-phosphate(out) + ATP + H2O = glycerol 2-phosphate(in) + ADP + phosphate + H(+). ATPase activity is stimulated when UgpB is bound to G3P. Transport is inhibited in vivo by increasing levels of internal phosphate. However, ATPase activity in proteoliposomes is neither inhibited by phosphate nor by the signal transducing protein PhoU or the phosphodiesterase UgpQ. Activated by gluconate and inhibited by fumarate. In terms of biological role, part of the ABC transporter complex UgpBAEC involved in sn-glycerol-3-phosphate (G3P) import. Responsible for energy coupling to the transport system. Can also transport glycerophosphoryl diesters, which are hydrolyzed to G3P and alcohol during transport. The G3P moiety can be detected in the cytoplasm whereas the corresponding alcohol is usually found in the culture medium. It was proposed by Yang et al that the complex could also transport glycerol-2-phosphate (G2P) in vivo, but it was shown later by Wuttge et al that UgpB does not bind G2P, questioning this transport activity. G2P might be converted in the periplasm to G3P before its transport. In Escherichia coli (strain K12), this protein is sn-glycerol-3-phosphate import ATP-binding protein UgpC.